Consider the following 348-residue polypeptide: Heptaprenyl diphosphate synthase component 2 (348 aa).

Lys73, Arg76, and His105 together coordinate isopentenyl diphosphate. Residues Asp112 and Asp116 each contribute to the Mg(2+) site. An all-trans-hexaprenyl diphosphate-binding site is contributed by Arg121. Arg122 serves as a coordination point for isopentenyl diphosphate. All-trans-hexaprenyl diphosphate-binding residues include Lys198, Thr199, and Gln236.

It belongs to the FPP/GGPP synthase family. As to quaternary structure, heterodimer of component I and II. Mg(2+) serves as cofactor.

The catalysed reaction is 4 isopentenyl diphosphate + (2E,6E)-farnesyl diphosphate = all-trans-heptaprenyl diphosphate + 4 diphosphate. In terms of biological role, supplies heptaprenyl diphosphate, the precursor for the side chain of the isoprenoid quinone menaquinone-7 (MQ-7). The polypeptide is Heptaprenyl diphosphate synthase component 2 (hepT) (Bacillus subtilis (strain 168)).